A 359-amino-acid polypeptide reads, in one-letter code: Chorismate synthase (359 aa).

Arginine 47 serves as a coordination point for NADP(+). FMN contacts are provided by residues 123–125, glycine 283, 298–302, and arginine 326; these read RSS and KPTSS.

The protein belongs to the chorismate synthase family. As to quaternary structure, homotetramer. FMNH2 is required as a cofactor.

It catalyses the reaction 5-O-(1-carboxyvinyl)-3-phosphoshikimate = chorismate + phosphate. It functions in the pathway metabolic intermediate biosynthesis; chorismate biosynthesis; chorismate from D-erythrose 4-phosphate and phosphoenolpyruvate: step 7/7. In terms of biological role, catalyzes the anti-1,4-elimination of the C-3 phosphate and the C-6 proR hydrogen from 5-enolpyruvylshikimate-3-phosphate (EPSP) to yield chorismate, which is the branch point compound that serves as the starting substrate for the three terminal pathways of aromatic amino acid biosynthesis. This reaction introduces a second double bond into the aromatic ring system. The polypeptide is Chorismate synthase (Chlamydia abortus (strain DSM 27085 / S26/3) (Chlamydophila abortus)).